Here is a 1957-residue protein sequence, read N- to C-terminus: Sporulation-specific protein 15 (1957 aa).

Composition is skewed to low complexity over residues 1–12 (MSNQSSSGSNTS) and 19–28 (ASSLVSSAAS). The tract at residues 1 to 102 (MSNQSSSGSN…STASSALPLT (102 aa)) is disordered. A compositionally biased stretch (basic and acidic residues) spans 58-83 (SQHEDSSEELKRQEVRGMRRHSDLSI). A compositionally biased stretch (polar residues) spans 90–102 (SEGSTASSALPLT). Ser105 carries the phosphoserine modification. Coiled coils occupy residues 199 to 785 (KQSE…FTSL), 804 to 1235 (VNMQ…DLLD), 1320 to 1471 (KVVA…SLDD), and 1481 to 1723 (EKLG…EQHE).

This sequence belongs to the MPC70 family. Monomer.

The protein localises to the cytoplasm. The protein resides in the cytoskeleton. It localises to the microtubule organizing center. It is found in the spindle pole body. In terms of biological role, has a role in the initiation of spore membrane formation. The polypeptide is Sporulation-specific protein 15 (spo15) (Schizosaccharomyces pombe (strain 972 / ATCC 24843) (Fission yeast)).